A 552-amino-acid polypeptide reads, in one-letter code: TBCC domain-containing protein 1 (552 aa).

The region spanning 304 to 435 (PRLHRIVVMS…LEDHMARTGL (132 aa)) is the C-CAP/cofactor C-like domain.

Belongs to the TBCC family. As to expression, expressed in brain and testis (at protein level).

The protein localises to the cytoplasm. It is found in the cytoskeleton. It localises to the microtubule organizing center. Its subcellular location is the centrosome. The protein resides in the spindle pole. Its function is as follows. Plays a role in the regulation of centrosome and Golgi apparatus positioning, with consequences on cell shape and cell migration. This Mus musculus (Mouse) protein is TBCC domain-containing protein 1 (Tbccd1).